The chain runs to 297 residues: ATP synthase gamma chain (297 aa).

The protein belongs to the ATPase gamma chain family. F-type ATPases have 2 components, CF(1) - the catalytic core - and CF(0) - the membrane proton channel. CF(1) has five subunits: alpha(3), beta(3), gamma(1), delta(1), epsilon(1). CF(0) has three main subunits: a, b and c.

It localises to the cell membrane. In terms of biological role, produces ATP from ADP in the presence of a proton gradient across the membrane. The gamma chain is believed to be important in regulating ATPase activity and the flow of protons through the CF(0) complex. This chain is ATP synthase gamma chain, found in Arthrobacter sp. (strain FB24).